The sequence spans 177 residues: Ribulose bisphosphate carboxylase small subunit, chloroplastic 6 (177 aa).

A chloroplast-targeting transit peptide spans 1–56; the sequence is MASSMMASTAAVARVGPAQTNMVAPFNGLRSSVAFPATRKANNDLSTLPSNGGRVS.

Belongs to the RuBisCO small chain family. As to quaternary structure, heterohexadecamer of 8 large and 8 small subunits.

It is found in the plastid. Its subcellular location is the chloroplast. Its function is as follows. RuBisCO catalyzes two reactions: the carboxylation of D-ribulose 1,5-bisphosphate, the primary event in carbon dioxide fixation, as well as the oxidative fragmentation of the pentose substrate. Both reactions occur simultaneously and in competition at the same active site. Although the small subunit is not catalytic it is essential for maximal activity. This Lemna gibba (Swollen duckweed) protein is Ribulose bisphosphate carboxylase small subunit, chloroplastic 6.